A 1894-amino-acid chain; its full sequence is Plexin-A4 (1894 aa).

Positions 1 to 23 are cleaved as a signal peptide; it reads MKAMPWNWTCLLSHLLMVGMGSS. In terms of domain architecture, Sema spans 24-507; that stretch reads TLLTRQPAPL…SERQLTRVPV (484 aa). Residues 24–1237 are Extracellular-facing; that stretch reads TLLTRQPAPL…IAPDSPLSLP (1214 aa). 10 disulfides stabilise this stretch: Cys95-Cys104, Cys130-Cys138, Cys284-Cys405, Cys300-Cys356, Cys374-Cys393, Cys510-Cys527, Cys516-Cys558, Cys519-Cys536, Cys530-Cys542, and Cys593-Cys612. The 51-residue stretch at 509 to 559 folds into the PSI 1 domain; sequence SCGQYQSCGECLGSGDPHCGWCVLHNTCTRKERCERSKEPRRFASEMKQCV. An N-linked (GlcNAc...) asparagine glycan is attached at Asn655. PSI domains lie at 655-702 and 803-856; these read NCSV…EDCP and KCGA…SKCT. IPT/TIG domains are found at residues 858-952, 954-1037, 1040-1139, and 1142-1230; these read PRIT…YYFM, LTLS…FQYV, PTIV…FTYY, and PVFE…YIAP. Residues Asn1007, Asn1132, and Asn1180 are each glycosylated (N-linked (GlcNAc...) asparagine). Residues 1238 to 1258 form a helical membrane-spanning segment; it reads AIVSIAVAGGLLIIFIVAVLI. At 1259-1894 the chain is on the cytoplasmic side; sequence AYKRKSRESD…QVITLMSLDS (636 aa). The residue at position 1350 (Lys1350) is an N6-acetyllysine.

It belongs to the plexin family. Interacts with NRP1 and NRP2.

It localises to the cell membrane. Coreceptor for SEMA3A. Necessary for signaling by class 3 semaphorins and subsequent remodeling of the cytoskeleton. Plays a role in axon guidance in the developing nervous system. Class 3 semaphorins bind to a complex composed of a neuropilin and a plexin. The plexin modulates the affinity of the complex for specific semaphorins, and its cytoplasmic domain is required for the activation of down-stream signaling events in the cytoplasm. In Homo sapiens (Human), this protein is Plexin-A4 (PLXNA4).